A 201-amino-acid chain; its full sequence is Small ribosomal subunit protein uS4c (201 aa).

In terms of domain architecture, S4 RNA-binding spans 89-150; it reads MRLDNILFRL…KERSKALIQN (62 aa).

It belongs to the universal ribosomal protein uS4 family. Part of the 30S ribosomal subunit. Contacts protein S5. The interaction surface between S4 and S5 is involved in control of translational fidelity.

It is found in the plastid. The protein localises to the chloroplast. In terms of biological role, one of the primary rRNA binding proteins, it binds directly to 16S rRNA where it nucleates assembly of the body of the 30S subunit. Its function is as follows. With S5 and S12 plays an important role in translational accuracy. The sequence is that of Small ribosomal subunit protein uS4c (rps4) from Phalaenopsis aphrodite subsp. formosana (Moth orchid).